A 205-amino-acid chain; its full sequence is Large ribosomal subunit protein uL4 (205 aa).

Residues Arg45–Tyr97 form a disordered region. The segment covering Gly60 to Gly71 has biased composition (basic residues).

The protein belongs to the universal ribosomal protein uL4 family. Part of the 50S ribosomal subunit.

In terms of biological role, one of the primary rRNA binding proteins, this protein initially binds near the 5'-end of the 23S rRNA. It is important during the early stages of 50S assembly. It makes multiple contacts with different domains of the 23S rRNA in the assembled 50S subunit and ribosome. Its function is as follows. Forms part of the polypeptide exit tunnel. This is Large ribosomal subunit protein uL4 from Lactobacillus johnsonii (strain CNCM I-12250 / La1 / NCC 533).